A 90-amino-acid chain; its full sequence is Movement protein (90 aa).

The chain crosses the membrane as a helical span at residues 32-52; it reads FVFVTFGLLIAVGVAWLAYTL.

Belongs to the mastrevirus movement protein family. As to quaternary structure, interacts with the capsid protein (CP). Part of a MP-CP-viral DNA complex.

Its subcellular location is the host membrane. Its function is as follows. Involved in the viral transport within, and between cells. The protein is Movement protein of Wheat dwarf virus (isolate Sweden) (WDV).